The sequence spans 248 residues: Phycocyanobilin:ferredoxin oxidoreductase (248 aa).

This sequence belongs to the HY2 family.

The catalysed reaction is (2R,3Z)-phycocyanobilin + 4 oxidized [2Fe-2S]-[ferredoxin] = biliverdin IXalpha + 4 reduced [2Fe-2S]-[ferredoxin] + 4 H(+). In terms of biological role, catalyzes the four-electron reduction of biliverdin IX-alpha (2-electron reduction at both the A and D rings); the reaction proceeds via an isolatable 2-electron intermediate, 181,182-dihydrobiliverdin. The protein is Phycocyanobilin:ferredoxin oxidoreductase of Synechococcus sp. (strain ATCC 27144 / PCC 6301 / SAUG 1402/1) (Anacystis nidulans).